The chain runs to 47 residues: MAFEEAIKRVFMKRICMKCNARNSWKAEKCRKCGYSNLRPKAKEARA.

The protein belongs to the eukaryotic ribosomal protein eL40 family.

This chain is Large ribosomal subunit protein eL40, found in Methanococcus vannielii (strain ATCC 35089 / DSM 1224 / JCM 13029 / OCM 148 / SB).